The chain runs to 94 residues: Small ribosomal subunit protein uS19 (94 aa).

The protein belongs to the universal ribosomal protein uS19 family.

In terms of biological role, protein S19 forms a complex with S13 that binds strongly to the 16S ribosomal RNA. The sequence is that of Small ribosomal subunit protein uS19 from Desulforudis audaxviator (strain MP104C).